The following is a 216-amino-acid chain: Gamma-glutamylcyclotransferase 2-1 (216 aa).

Residue 5 to 10 (VFGYGS) coordinates substrate. Glu-87 (proton acceptor) is an active-site residue.

Belongs to the gamma-glutamylcyclotransferase family. Requires Mn(2+) as cofactor. As to expression, expressed in the central vascular bundle of roots, leaf veins, hydathodes, cauline leaves, shoot apex, sepal veins, flower receptacles and developing seeds.

The protein resides in the cytoplasm. It catalyses the reaction an alpha-(gamma-L-glutamyl)-L-amino acid = 5-oxo-L-proline + an L-alpha-amino acid. In terms of biological role, catalyzes the formation of 5-oxoproline from gamma-glutamyl dipeptides and plays a significant role in glutathione (GSH) homeostasis. Converts both GSH and gamma-glutamyl-L-alanine to 5-oxoproline in vitro. Plays a role in detoxification of heavy metals and metalloids by recycling glutamate and maintaining GSH homeostasis. The sequence is that of Gamma-glutamylcyclotransferase 2-1 from Arabidopsis thaliana (Mouse-ear cress).